The sequence spans 335 residues: Peroxidase 2 (335 aa).

Positions 1-29 (MAAATAPKTMPSSVFAAALLLLAAAACQA) are cleaved as a signal peptide. 4 disulfides stabilise this stretch: Cys-44–Cys-125, Cys-77–Cys-82, Cys-131–Cys-329, and Cys-212–Cys-238. Residue His-75 is the Proton acceptor of the active site. Ca(2+) contacts are provided by Asp-76, Val-79, Gly-81, Asp-83, and Ser-85. N-linked (GlcNAc...) asparagine glycosylation is found at Asn-166 and Asn-180. Residue His-205 coordinates heme b. Thr-206 is a binding site for Ca(2+). An N-linked (GlcNAc...) asparagine glycan is attached at Asn-241. Asp-253, Thr-256, and Asp-261 together coordinate Ca(2+).

It belongs to the peroxidase family. Classical plant (class III) peroxidase subfamily. Requires heme b as cofactor. Ca(2+) is required as a cofactor. Expressed in the elongating region of young roots, and in root vascular tissues and epidermis.

It localises to the secreted. The enzyme catalyses 2 a phenolic donor + H2O2 = 2 a phenolic radical donor + 2 H2O. Its function is as follows. Removal of H(2)O(2), oxidation of toxic reductants, biosynthesis and degradation of lignin, suberization, auxin catabolism, response to environmental stresses such as wounding, pathogen attack and oxidative stress. These functions might be dependent on each isozyme/isoform in each plant tissue. The protein is Peroxidase 2 (PER2) of Zea mays (Maize).